The sequence spans 178 residues: Probable coatomer subunit zeta-B (178 aa).

This sequence belongs to the adaptor complexes small subunit family. Oligomeric complex that consists of at least the alpha, beta, beta', gamma, delta, epsilon and zeta subunits.

The protein localises to the cytoplasm. It is found in the golgi apparatus membrane. Its subcellular location is the cytoplasmic vesicle. It localises to the COPI-coated vesicle membrane. Functionally, the coatomer is a cytosolic protein complex that binds to dilysine motifs and reversibly associates with Golgi non-clathrin-coated vesicles, which further mediate biosynthetic protein transport from the ER, via the Golgi up to the trans Golgi network. Coatomer complex is required for budding from Golgi membranes, and is essential for the retrograde Golgi-to-ER transport of dilysine-tagged proteins. The zeta subunit may be involved in regulating the coat assembly and, hence, the rate of biosynthetic protein transport due to its association-dissociation properties with the coatomer complex. The protein is Probable coatomer subunit zeta-B (copZb) of Dictyostelium discoideum (Social amoeba).